We begin with the raw amino-acid sequence, 776 residues long: Peregrinol diphosphate synthase CPS1, chloroplastic (776 aa).

Residues 1–17 (MASTPTLNLSITTPFVR) constitute a chloroplast transit peptide. Residue Lys238 coordinates substrate. Residues Asp371 and Asp373 each coordinate Mg(2+). The DXDD motif signature appears at 371–374 (DIDD). Lys457 is a binding site for substrate.

This sequence belongs to the terpene synthase family. Requires Mg(2+) as cofactor. In terms of tissue distribution, present in both leaves and flowers, with higher levels in leaves.

Its subcellular location is the plastid. The protein localises to the chloroplast. The enzyme catalyses peregrinol diphosphate = (2E,6E,10E)-geranylgeranyl diphosphate + H2O. Its pathway is secondary metabolite biosynthesis; terpenoid biosynthesis. Its function is as follows. Involved in the biosynthesis of labdane-type diterpenoid including marrubiin and other labdane-related furanoid diterpenoids with potential applications as anti-diabetics, analgesics or vasorelaxants. Terpene synthase that produces peregrinol diphosphate from geranylgeranyl diphosphate (GGPP). In Marrubium vulgare (White horehound), this protein is Peregrinol diphosphate synthase CPS1, chloroplastic.